The chain runs to 51 residues: Large ribosomal subunit protein eL39 (51 aa).

The protein belongs to the eukaryotic ribosomal protein eL39 family.

The polypeptide is Large ribosomal subunit protein eL39 (Pyrobaculum islandicum (strain DSM 4184 / JCM 9189 / GEO3)).